We begin with the raw amino-acid sequence, 135 residues long: Protein PsiE homolog (135 aa).

The next 4 helical transmembrane spans lie at 20–40 (VGLI…TIHL), 54–74 (YMLI…ALIV), 82–102 (HFPL…LIIV), and 107–127 (PIDT…LYLA).

This sequence belongs to the PsiE family.

It is found in the cell inner membrane. In Yersinia pestis (strain Pestoides F), this protein is Protein PsiE homolog.